A 230-amino-acid polypeptide reads, in one-letter code: Uracil-DNA glycosylase (230 aa).

The Proton acceptor role is filled by Asp70.

It belongs to the uracil-DNA glycosylase (UDG) superfamily. UNG family.

Its subcellular location is the cytoplasm. The catalysed reaction is Hydrolyzes single-stranded DNA or mismatched double-stranded DNA and polynucleotides, releasing free uracil.. Functionally, excises uracil residues from the DNA which can arise as a result of misincorporation of dUMP residues by DNA polymerase or due to deamination of cytosine. The chain is Uracil-DNA glycosylase from Pseudomonas putida (strain W619).